We begin with the raw amino-acid sequence, 199 residues long: Prolactin-2 (199 aa).

3 disulfides stabilise this stretch: cysteine 4/cysteine 11, cysteine 58/cysteine 174, and cysteine 191/cysteine 199.

This sequence belongs to the somatotropin/prolactin family.

It is found in the secreted. The polypeptide is Prolactin-2 (Crocodylus novaeguineae (Crocodile)).